Consider the following 722-residue polypeptide: Polyribonucleotide nucleotidyltransferase (722 aa).

Positions 486 and 492 each coordinate Mg(2+). The KH domain maps to 553–612 (PRITTIQIRPEFIKNVIGPGGKVIKDIIARTGAAINIEDSGRVDIASANGEAVKAAIAMI). The S1 motif domain maps to 622 to 690 (GKIYTGTVRK…KTGKIRLSRK (69 aa)). The disordered stretch occupies residues 696–722 (RAAQQGAAAGEAAAQPAPAPTQPDAKA).

It belongs to the polyribonucleotide nucleotidyltransferase family. Requires Mg(2+) as cofactor.

It localises to the cytoplasm. The catalysed reaction is RNA(n+1) + phosphate = RNA(n) + a ribonucleoside 5'-diphosphate. In terms of biological role, involved in mRNA degradation. Catalyzes the phosphorolysis of single-stranded polyribonucleotides processively in the 3'- to 5'-direction. The polypeptide is Polyribonucleotide nucleotidyltransferase (Myxococcus xanthus (strain DK1622)).